A 186-amino-acid chain; its full sequence is Interferon beta (186 aa).

Positions 1–21 (MTYRWILPMALLLCFSTTALS) are cleaved as a signal peptide. Tyr-24 is subject to Phosphotyrosine. A disulfide bridge connects residues Cys-52 and Cys-161. N-linked (GlcNAc...) asparagine glycans are attached at residues Asn-101 and Asn-136.

This sequence belongs to the alpha/beta interferon family. As to quaternary structure, monomer.

The protein localises to the secreted. Its function is as follows. Type I interferon cytokine that plays a key role in the innate immune response to infection, developing tumors and other inflammatory stimuli. Signals via binding to high-affinity (IFNAR2) and low-affinity (IFNAR1) heterodimeric receptor, activating the canonical Jak-STAT signaling pathway resulting in transcriptional activation or repression of interferon-regulated genes that encode the effectors of the interferon response, such as antiviral proteins, regulators of cell proliferation and differentiation, and immunoregulatory proteins. Signals mostly via binding to a IFNAR1-IFNAR2 heterodimeric receptor, but can also function with IFNAR1 alone and independently of Jak-STAT pathways. Elicits a wide variety of responses, including antiviral and antibacterial activities, and can regulate the development of B-cells, myelopoiesis and lipopolysaccharide (LPS)-inducible production of tumor necrosis factor. Plays a role in neuronal homeostasis by regulating dopamine turnover and protecting dopaminergic neurons: acts by promoting neuronal autophagy and alpha-synuclein clearance, thereby preventing dopaminergic neuron loss. IFNB1 is more potent than interferon-alpha (IFN-alpha) in inducing the apoptotic and antiproliferative pathways required for control of tumor cell growth. In Equus caballus (Horse), this protein is Interferon beta (IFNB1).